An 845-amino-acid chain; its full sequence is MPSALAIFTCRPNSHPFQERHVYLDEPIKIGRSVARCRPAQNNATFDCKVLSRNHALVWFDHKTSKFYLQDTKSSNGTFINSQRLSRGSEESPPCEILSGDIIQFGVDVTENTRKVTHGCIVSTIKLFLPDGMEARLRSDVIHAPLPSPVDKVAANTPSMYSQELFQLSQYLQEALHREQMLEQKLATLQRLLAITQEASDTSWQALIDEDRLLSRLEVMGNQLQACSKNQTEDSLRKELIALQEDKHSYETTAKESLRRVLQEKIEVVRKLSEVERSLSNTEDECTHLKEMNERTQEELRELANKYNGAVNEIKDLSDKLKVAEGKQEEIQQKGQAEKKELQTKIDEMEEKEQELQAKIEALQADNDFTNERLTALQVRLEHLQEKTLKECSSLGIQVDDFLPKINGSTEKEHLLSKSGGDCTFIHQFLECQKKLMVQGHLTKVVEESKLSKENQAKAKESDLSDTLSPSKEKSSDDTTDAQMDEQDLNEPLAKVSLLKDDLQGTQSETEAKQDIQHLRKELVEAQELARTSKQKCFELQALLEEERKAYRNQVEESAKQIQVLQVQLQKLHMDMENLQEEKDTEISSTRDKLLSAQDEILLLRQAAAEAVSERDTDFVSLQEELKKVRAELEGWRKAASEYENEIRSLQSSFQLRCQQCEDQQREEATRLQGELEKLKKEWDVLETECHSLKKENVLLSSELQRQEKELHNSQKQSFELTSDLSILQMTRKELEKQVGSLKEQHLRDAADLKTLLSKAENQAKDVQKEYEKTQTVLSELKLKFEMTEQEKQSITDELKQCKDNLKLLREKGNNKPWPWMPMLAALVAVTAMVLYVPGLARASP.

The interval 1–163 (MPSALAIFTC…AANTPSMYSQ (163 aa)) is necessary for targeting to centrosomes. At 1 to 819 (MPSALAIFTC…REKGNNKPWP (819 aa)) the chain is on the cytoplasmic side. An FHA domain is found at 28-85 (IKIGRSVARCRPAQNNATFDCKVLSRNHALVWFDHKTSKFYLQDTKSSNGTFINSQRL). Residues 28-85 (IKIGRSVARCRPAQNNATFDCKVLSRNHALVWFDHKTSKFYLQDTKSSNGTFINSQRL) traverse the membrane as a helical; Anchor for type IV membrane protein segment. S148 carries the post-translational modification Phosphoserine. Coiled-coil stretches lie at residues 167–202 (QLSQ…ASDT) and 231–388 (QTED…QEKT). The chain crosses the membrane as a helical; Anchor for type IV membrane protein span at residues 339–359 (KKELQTKIDEMEEKEQELQAK). Basic and acidic residues predominate over residues 451 to 463 (LSKENQAKAKESD). The tract at residues 451–484 (LSKENQAKAKESDLSDTLSPSKEKSSDDTTDAQM) is disordered. Phosphoserine is present on residues S465 and S469. A coiled-coil region spans residues 506 to 816 (TQSETEAKQD…KLLREKGNNK (311 aa)). The helical; Anchor for type IV membrane protein transmembrane segment at 820–840 (WMPMLAALVAVTAMVLYVPGL) threads the bilayer. Residues 841–845 (ARASP) are Extracellular-facing.

The protein belongs to the SLMAP family. In terms of assembly, homodimer. Interacts with myosin. Interacts with SIKE1 and both associate with the STRIPAK core complex composed of PP2A catalytic and scaffolding subunits, the striatins (PP2A regulatory subunits), the striatin-associated proteins MOB4, STRIP1 and STRIP2, PDCD10 and members of the STE20 kinases, such as STK24 and STK26. Interacts (via FHA domain) with STK3 (when phosphorylated); the interaction associates STK3 with the STRIPAK complex. Expressed in proliferating myoblasts and differentiated myotubes (at protein level). Expressed in myoblasts, cardiac and skeletal muscles.

Its subcellular location is the cell membrane. It localises to the sarcolemma. The protein resides in the cytoplasm. It is found in the myofibril. The protein localises to the sarcomere. Its subcellular location is the m line. It localises to the z line. The protein resides in the cytoskeleton. It is found in the microtubule organizing center. The protein localises to the centrosome. Its subcellular location is the endoplasmic reticulum membrane. It localises to the mitochondrion membrane. Functionally, associates with the striatin-interacting phosphatase and kinase (STRIPAK) core complex, forming the extended (SIKE1:SLMAP)STRIPAK complex. The (SIKE1:SLMAP)STRIPAK complex dephosphorylates STK3 leading to the inhibition of Hippo signaling and the control of cell growth. May play a role during myoblast fusion. In Mus musculus (Mouse), this protein is Sarcolemmal membrane-associated protein (Slmap).